A 160-amino-acid chain; its full sequence is MRVAIYPGSFDPVTYGHIDIIKRGANLFDKLIVAVLLNPAKRPLFSIQERIELLKEVTKDIPNVEVDYFDGLLVEYAKKVNASAIIKGLRMVSDFEYEFQMALVNKKLNPSVETIFLMTSPKYGYLSSSLVKEIAQFGGCLSEFVPDIVAERLMEKFKKS.

Serine 9 is a substrate binding site. Residues 9–10 (SF) and histidine 17 contribute to the ATP site. Substrate contacts are provided by lysine 41, leucine 73, and lysine 87. ATP-binding positions include 88 to 90 (GLR), glutamate 98, and 123 to 129 (YGYLSSS).

It belongs to the bacterial CoaD family. Homohexamer. The cofactor is Mg(2+).

The protein resides in the cytoplasm. It catalyses the reaction (R)-4'-phosphopantetheine + ATP + H(+) = 3'-dephospho-CoA + diphosphate. It functions in the pathway cofactor biosynthesis; coenzyme A biosynthesis; CoA from (R)-pantothenate: step 4/5. Reversibly transfers an adenylyl group from ATP to 4'-phosphopantetheine, yielding dephospho-CoA (dPCoA) and pyrophosphate. This Caldanaerobacter subterraneus subsp. tengcongensis (strain DSM 15242 / JCM 11007 / NBRC 100824 / MB4) (Thermoanaerobacter tengcongensis) protein is Phosphopantetheine adenylyltransferase.